The primary structure comprises 208 residues: MSDENRLVAAVRTEFGKGAARRARRDGQVPAVLYGHGEDPRHLNVPSREFAAILRAHGTNAVLTLDIDGKEQVALTKSVVVHPIRNYIEHADLLVIKKGEKVTVDVPVVVTGEAASGTLVAQDAATVSLEADALHIPEQIEVSVEGLEVGTQILANQLELPKGATLQADEELLIVNVVAAPTAADLEEETGEAEGETAAAPAEEGAES.

The segment covering 185–195 (DLEEETGEAEG) has biased composition (acidic residues). The segment at 185-208 (DLEEETGEAEGETAAAPAEEGAES) is disordered. Low complexity predominate over residues 196 to 208 (ETAAAPAEEGAES).

This sequence belongs to the bacterial ribosomal protein bL25 family. CTC subfamily. Part of the 50S ribosomal subunit; part of the 5S rRNA/L5/L18/L25 subcomplex. Contacts the 5S rRNA. Binds to the 5S rRNA independently of L5 and L18.

This is one of the proteins that binds to the 5S RNA in the ribosome where it forms part of the central protuberance. The chain is Large ribosomal subunit protein bL25 from Rhodococcus opacus (strain B4).